We begin with the raw amino-acid sequence, 306 residues long: Dermonecrotic toxin LiSicTox-alphaIA1a (306 aa).

The N-terminal stretch at 1–18 (MLPYIVLVLGCWSVLSQA) is a signal peptide. A propeptide spanning residues 19–26 (AQTDDEER) is cleaved from the precursor. His-38 is an active-site residue. Mg(2+)-binding residues include Glu-58 and Asp-60. His-74 functions as the Nucleophile in the catalytic mechanism. 2 cysteine pairs are disulfide-bonded: Cys-78–Cys-84 and Cys-80–Cys-223. Asp-118 is a binding site for Mg(2+).

The protein belongs to the arthropod phospholipase D family. Class II subfamily. Class IIa sub-subfamily. The cofactor is Mg(2+). Expressed by the venom gland.

The protein localises to the secreted. It carries out the reaction an N-(acyl)-sphingosylphosphocholine = an N-(acyl)-sphingosyl-1,3-cyclic phosphate + choline. The catalysed reaction is an N-(acyl)-sphingosylphosphoethanolamine = an N-(acyl)-sphingosyl-1,3-cyclic phosphate + ethanolamine. It catalyses the reaction a 1-acyl-sn-glycero-3-phosphocholine = a 1-acyl-sn-glycero-2,3-cyclic phosphate + choline. The enzyme catalyses a 1-acyl-sn-glycero-3-phosphoethanolamine = a 1-acyl-sn-glycero-2,3-cyclic phosphate + ethanolamine. It carries out the reaction 1-hexadecanoyl-sn-glycero-3-phosphocholine = 1-hexadecanoyl-sn-glycero-2,3-cyclic phosphate + choline. With respect to regulation, catalytic activity and hemolysis are inhibited by divalent ion chelators (1,10-phenanthroline, EDTA, and EGTA). Its function is as follows. Dermonecrotic toxins cleave the phosphodiester linkage between the phosphate and headgroup of certain phospholipids (sphingolipid and lysolipid substrates), forming an alcohol (often choline) and a cyclic phosphate. This toxin acts on sphingomyelin (SM) with high activity. It discriminate between the number of carbon atoms in the substrates, since it prefers SM with six carbons in the fatty acid chain (SM6:0) to other SMs (SM12:0 &gt; SM16:0 &gt; SM18:0 &gt; SM2:0 &gt; SM24:0). It also acts on lysophosphatidylcholine (LPC) (LPC16:0 = LPC12:0 &gt; LPC18:0), and lyso-platelet activating factor (LPAF, an alkyl-LPC) but not on phosphatidylcholine (PC). It may also act on ceramide phosphoethanolamine (CPE), lysophosphatidylcholine (LPC) and lysophosphatidylethanolamine (LPE), but not on lysophosphatidylserine (LPS), and lysophosphatidylglycerol (LPG). It acts by transphosphatidylation, releasing exclusively cyclic phosphate products as second products. In vivo, it induces dermonecrosis, vascular permeability, platelet aggregation, inflammatory response, edema and cytotoxicity against renal epithelial cells. It causes direct nephrotoxicity and is directly toxic to liver. It also induces hemolysis in a complement-dependent manner as well as in a complement-independent manner. The hemolysis provoked in a complement-independent manner is composed of several steps. The toxin binds to erythrocyte membranes, hydrolyzes membrane phospholipids (SM and LPC) thus generating metabolism products that cause hemolysis, probably by provoking an increase of calcium inside cells. The calcium influx is due to the opening of L-type calcium channels, since L-type calcium channel blockers inhibit calcium influx. Is lethal to mice when intraperitoneally injected. This chain is Dermonecrotic toxin LiSicTox-alphaIA1a, found in Loxosceles intermedia (Brown spider).